Here is a 184-residue protein sequence, read N- to C-terminus: NADH-quinone oxidoreductase subunit B (184 aa).

Positions 37, 38, 103, and 132 each coordinate [4Fe-4S] cluster.

This sequence belongs to the complex I 20 kDa subunit family. In terms of assembly, NDH-1 is composed of 14 different subunits. Subunits NuoB, C, D, E, F, and G constitute the peripheral sector of the complex. It depends on [4Fe-4S] cluster as a cofactor.

The protein resides in the cell membrane. The catalysed reaction is a quinone + NADH + 5 H(+)(in) = a quinol + NAD(+) + 4 H(+)(out). Its function is as follows. NDH-1 shuttles electrons from NADH, via FMN and iron-sulfur (Fe-S) centers, to quinones in the respiratory chain. The immediate electron acceptor for the enzyme in this species is believed to be a menaquinone. Couples the redox reaction to proton translocation (for every two electrons transferred, four hydrogen ions are translocated across the cytoplasmic membrane), and thus conserves the redox energy in a proton gradient. This chain is NADH-quinone oxidoreductase subunit B, found in Mycolicibacterium paratuberculosis (strain ATCC BAA-968 / K-10) (Mycobacterium paratuberculosis).